A 343-amino-acid chain; its full sequence is MTTDTTGRTGNPAAAASPERFRYGFLKGNPQLTKNGELKHLLSIEGLPRSIVNHILDTAEQFVSVTDREVKKVPLLRGKSVFNLFFENSTRTRTTFEIAATRLSADVLNLNINASSTSKGESLLDTINNLSAMHADLFVVRHASSGAPYLIAEHCAPHVHVINAGDGRHAHPTQGLLDMYTIRHYKRDFTKLRVAIVGDILHSRVARSDIHALTTLGVPEVRAIGPRTLLPGGLEQMGVKVFHNLDEGLKGVDVIIMLRLQNERMSGALLPSAQEYFKTWGLTPERLALAAPDAIVMHPGPMNRGVEIDSQVADGPQSVILNQVTFGIAVRMAVMGIVAGNND.

Carbamoyl phosphate-binding residues include Arg-91 and Thr-92. Lys-119 is a binding site for L-aspartate. Positions 141, 171, and 174 each coordinate carbamoyl phosphate. L-aspartate contacts are provided by Arg-204 and Arg-259. Carbamoyl phosphate-binding residues include Gly-300 and Pro-301.

This sequence belongs to the aspartate/ornithine carbamoyltransferase superfamily. ATCase family. As to quaternary structure, heterododecamer (2C3:3R2) of six catalytic PyrB chains organized as two trimers (C3), and six regulatory PyrI chains organized as three dimers (R2).

The enzyme catalyses carbamoyl phosphate + L-aspartate = N-carbamoyl-L-aspartate + phosphate + H(+). It participates in pyrimidine metabolism; UMP biosynthesis via de novo pathway; (S)-dihydroorotate from bicarbonate: step 2/3. Its function is as follows. Catalyzes the condensation of carbamoyl phosphate and aspartate to form carbamoyl aspartate and inorganic phosphate, the committed step in the de novo pyrimidine nucleotide biosynthesis pathway. This chain is Aspartate carbamoyltransferase catalytic subunit, found in Burkholderia multivorans (strain ATCC 17616 / 249).